The primary structure comprises 389 residues: Succinate--CoA ligase [ADP-forming] subunit beta (389 aa).

The ATP-grasp domain maps to 9-244; the sequence is KQLFADYGLP…PSQEDERERR (236 aa). Residues lysine 46, 53–55, glutamate 99, threonine 102, and glutamate 107 each bind ATP; that span reads GRG. Mg(2+)-binding residues include asparagine 199 and aspartate 213. Substrate contacts are provided by residues asparagine 264 and 321–323; that span reads GIV.

Belongs to the succinate/malate CoA ligase beta subunit family. Heterotetramer of two alpha and two beta subunits. The cofactor is Mg(2+).

It carries out the reaction succinate + ATP + CoA = succinyl-CoA + ADP + phosphate. The enzyme catalyses GTP + succinate + CoA = succinyl-CoA + GDP + phosphate. Its pathway is carbohydrate metabolism; tricarboxylic acid cycle; succinate from succinyl-CoA (ligase route): step 1/1. Functionally, succinyl-CoA synthetase functions in the citric acid cycle (TCA), coupling the hydrolysis of succinyl-CoA to the synthesis of either ATP or GTP and thus represents the only step of substrate-level phosphorylation in the TCA. The beta subunit provides nucleotide specificity of the enzyme and binds the substrate succinate, while the binding sites for coenzyme A and phosphate are found in the alpha subunit. The chain is Succinate--CoA ligase [ADP-forming] subunit beta from Alcanivorax borkumensis (strain ATCC 700651 / DSM 11573 / NCIMB 13689 / SK2).